Consider the following 380-residue polypeptide: Queuine tRNA-ribosyltransferase (380 aa).

Asp96 acts as the Proton acceptor in catalysis. Residues 96-100 (DSGGF), Asp150, Gln193, and Gly220 each bind substrate. The tract at residues 251–257 (GVGAPDS) is RNA binding. The active-site Nucleophile is the Asp270. The RNA binding; important for wobble base 34 recognition stretch occupies residues 275-279 (TRIAR). 4 residues coordinate Zn(2+): Cys308, Cys310, Cys313, and His339.

This sequence belongs to the queuine tRNA-ribosyltransferase family. As to quaternary structure, homodimer. Within each dimer, one monomer is responsible for RNA recognition and catalysis, while the other monomer binds to the replacement base PreQ1. The cofactor is Zn(2+).

It catalyses the reaction 7-aminomethyl-7-carbaguanine + guanosine(34) in tRNA = 7-aminomethyl-7-carbaguanosine(34) in tRNA + guanine. Its pathway is tRNA modification; tRNA-queuosine biosynthesis. Catalyzes the base-exchange of a guanine (G) residue with the queuine precursor 7-aminomethyl-7-deazaguanine (PreQ1) at position 34 (anticodon wobble position) in tRNAs with GU(N) anticodons (tRNA-Asp, -Asn, -His and -Tyr). Catalysis occurs through a double-displacement mechanism. The nucleophile active site attacks the C1' of nucleotide 34 to detach the guanine base from the RNA, forming a covalent enzyme-RNA intermediate. The proton acceptor active site deprotonates the incoming PreQ1, allowing a nucleophilic attack on the C1' of the ribose to form the product. After dissociation, two additional enzymatic reactions on the tRNA convert PreQ1 to queuine (Q), resulting in the hypermodified nucleoside queuosine (7-(((4,5-cis-dihydroxy-2-cyclopenten-1-yl)amino)methyl)-7-deazaguanosine). The protein is Queuine tRNA-ribosyltransferase of Streptococcus agalactiae serotype Ia (strain ATCC 27591 / A909 / CDC SS700).